The sequence spans 459 residues: Transcription factor 7-like 2 (459 aa).

Gly residues predominate over residues 1-11 (MPQLNGGGGDD). The tract at residues 1–53 (MPQLNGGGGDDLGANDELISFKDEGEQEEKNSENSSAERDLADVKSSLVNESE) is CTNNB1-binding. Residues 1–96 (MPQLNGGGGD…AKRQDGGLFK (96 aa)) form a disordered region. The span at 19–43 (ISFKDEGEQEEKNSENSSAERDLAD) shows a compositional bias: basic and acidic residues. A Glycyl lysine isopeptide (Lys-Gly) (interchain with G-Cter in SUMO2) cross-link involves residue Lys-22. A compositionally biased stretch (polar residues) spans 47–56 (SLVNESETNQ). Residues 63–91 (EAERRPPPRSESFRDKSRESLEEAAKRQD) are compositionally biased toward basic and acidic residues. Residues Thr-178 and Thr-189 each carry the phosphothreonine; by NLK modification. A mediates interaction with MAD2L2 region spans residues 178-372 (TPLITYSNEH…RRWHALSREE (195 aa)). Over residues 295–305 (TVKQESSQSDV) the composition is skewed to polar residues. 2 disordered regions span residues 295–327 (TVKQESSQSDVGSLHSSKHQDSKKEEEKKKPHI) and 397–418 (RDNYGKKKKRKRDKQPGETNEH). Lys-297 is covalently cross-linked (Glycyl lysine isopeptide (Lys-Gly) (interchain with G-Cter in SUMO)). The segment covering 312–323 (KHQDSKKEEEKK) has biased composition (basic and acidic residues). A DNA-binding region (HMG box) is located at residues 327–395 (IKKPLNAFML…LHMQLYPGWS (69 aa)). A Nuclear localization signal motif is present at residues 402–408 (KKKKRKR).

Belongs to the TCF/LEF family. Interacts with TGFB1I1. Interacts with SPIN1. Interacts with CTNNB1 (via the armadillo repeat); forms stable transcription complex. Interacts with EP300. Interacts with NLK. Interacts with CCDC85B (probably through the HMG box); prevents interaction with CTNNB1. Interacts with TNIK. Interacts with MAD2L2; prevents TCF7L2/TCF4 binding to promZIPK/DAPK3oters, negatively modulating its transcriptional activity. Interacts with ZIPK/DAPK3. Interacts with XIAP/BIRC4 and TLE3. Interacts with DDIT3/CHOP. The CTNNB1 and TCF7L2/TCF4 complex interacts with PML (isoform PML-4). Identified in a complex with CTNNB1 and FERMT2. Interacts with C11orf84/SPINDOC in a SPIN1-dependent manner. Interacts with DAZAP2; the interaction results in localization of DAZAP2 to the nucleus. Phosphorylated at Thr-178 and/or Thr-189 by NLK. Phosphorylation by NLK at these sites inhibits DNA-binding by TCF7L2/TCF4, thereby preventing transcriptional activation of target genes of the canonical Wnt/beta-catenin signaling pathway. Post-translationally, polysumoylated. Sumoylation is enhanced by PIAS family members and desumoylation is enhanced by SENP2. Sumoylation/desumoylation regulates TCF7L2/TCF4 transcription activity in the Wnt/beta-catenin signaling pathway without altering interaction with CTNNB1 nor binding to DNA. In terms of tissue distribution, detected in adult brain and liver, and at lower levels in intestine, with a clear increase from the distal colon to the duodenum. Detected at low levels in heart, lung, kidney, pituitary and testis.

The protein localises to the nucleus. It is found in the PML body. Participates in the Wnt signaling pathway and modulates MYC expression by binding to its promoter in a sequence-specific manner. Acts as a repressor in the absence of CTNNB1, and as activator in its presence. Activates transcription from promoters with several copies of the Tcf motif CCTTTGATC in the presence of CTNNB1. TLE1, TLE2, TLE3 and TLE4 repress transactivation mediated by TCF7L2/TCF4 and CTNNB1. Expression of dominant-negative mutants results in cell-cycle arrest in G1. Necessary for the maintenance of the epithelial stem-cell compartment of the small intestine. The protein is Transcription factor 7-like 2 (Tcf7l2) of Mus musculus (Mouse).